We begin with the raw amino-acid sequence, 550 residues long: Chaperonin GroEL 2 (550 aa).

Residues 30–33 (TLGP), K51, 87–91 (DGTTT), G415, 480–482 (NAA), and D496 contribute to the ATP site.

This sequence belongs to the chaperonin (HSP60) family. Forms a cylinder of 14 subunits composed of two heptameric rings stacked back-to-back. Interacts with the co-chaperonin GroES.

Its subcellular location is the cytoplasm. The catalysed reaction is ATP + H2O + a folded polypeptide = ADP + phosphate + an unfolded polypeptide.. In terms of biological role, together with its co-chaperonin GroES, plays an essential role in assisting protein folding. The GroEL-GroES system forms a nano-cage that allows encapsulation of the non-native substrate proteins and provides a physical environment optimized to promote and accelerate protein folding. This is Chaperonin GroEL 2 from Erythrobacter litoralis (strain HTCC2594).